The chain runs to 91 residues: Non-specific lipid-transfer protein 1 (91 aa).

Intrachain disulfides connect cysteine 3/cysteine 50, cysteine 13/cysteine 27, cysteine 28/cysteine 73, and cysteine 48/cysteine 87. A 1,2-diacyl-sn-glycero-3-phosphocholine is bound by residues arginine 44 and tyrosine 79.

Monomer.

Functionally, plant non-specific lipid-transfer proteins transfer phospholipids as well as galactolipids across membranes. May play a role in wax or cutin deposition in the cell walls of expanding epidermal cells and certain secretory tissues. Has antifungal activity against F.solani, F.oxysporum, P.aphanidermatum and S.rolfsii. Has antibacterial activity against the Gram-positive bacterium S.aureus but not against the Gram-negative bacterium S.typhimurium. The chain is Non-specific lipid-transfer protein 1 from Vigna radiata var. radiata (Mung bean).